The sequence spans 390 residues: Cytochrome b (390 aa).

Helical transmembrane passes span 32-52 (MGSL…FMAM), 76-98 (WFLR…IHMG), 113-133 (LWTI…LGYC), and 179-199 (FFAL…MHMM). 2 residues coordinate heme b: His82 and His96. Heme b is bound by residues His183 and His197. An a ubiquinone-binding site is contributed by His202. The next 4 membrane-spanning stretches (helical) occupy residues 225–245 (FVFK…LFVF), 289–309 (LMGV…PFTD), 321–341 (LSKL…QIGA), and 348–368 (YILM…VFIP).

This sequence belongs to the cytochrome b family. As to quaternary structure, fungal cytochrome b-c1 complex contains 10 subunits; 3 respiratory subunits, 2 core proteins and 5 low-molecular weight proteins. Cytochrome b-c1 complex is a homodimer. Heme b is required as a cofactor.

Its subcellular location is the mitochondrion inner membrane. Component of the ubiquinol-cytochrome c reductase complex (complex III or cytochrome b-c1 complex) that is part of the mitochondrial respiratory chain. The b-c1 complex mediates electron transfer from ubiquinol to cytochrome c. Contributes to the generation of a proton gradient across the mitochondrial membrane that is then used for ATP synthesis. In Naumovozyma castellii (Yeast), this protein is Cytochrome b (COB).